We begin with the raw amino-acid sequence, 399 residues long: Succinate--CoA ligase [ADP-forming] subunit beta (399 aa).

An ATP-grasp domain is found at 9 to 254; that stretch reads KELLAKYGIG…ETEEDPAEVE (246 aa). ATP-binding positions include Lys-46, 53–55, Val-112, and Glu-117; that span reads GRG. Mg(2+)-binding residues include Asn-209 and Asp-223. Residues Asn-274 and 331 to 333 each bind substrate; that span reads GIM.

Belongs to the succinate/malate CoA ligase beta subunit family. As to quaternary structure, heterotetramer of two alpha and two beta subunits. It depends on Mg(2+) as a cofactor.

The enzyme catalyses succinate + ATP + CoA = succinyl-CoA + ADP + phosphate. It catalyses the reaction GTP + succinate + CoA = succinyl-CoA + GDP + phosphate. The protein operates within carbohydrate metabolism; tricarboxylic acid cycle; succinate from succinyl-CoA (ligase route): step 1/1. In terms of biological role, succinyl-CoA synthetase functions in the citric acid cycle (TCA), coupling the hydrolysis of succinyl-CoA to the synthesis of either ATP or GTP and thus represents the only step of substrate-level phosphorylation in the TCA. The beta subunit provides nucleotide specificity of the enzyme and binds the substrate succinate, while the binding sites for coenzyme A and phosphate are found in the alpha subunit. The protein is Succinate--CoA ligase [ADP-forming] subunit beta of Erythrobacter litoralis (strain HTCC2594).